We begin with the raw amino-acid sequence, 405 residues long: Phosphoglycerate kinase (405 aa).

Substrate-binding positions include 24–26 (DFN), Arg40, 63–66 (HLGR), Arg122, and Arg162. ATP is bound by residues Lys213, Glu332, and 361-364 (GGDS).

The protein belongs to the phosphoglycerate kinase family. Monomer.

It localises to the cytoplasm. The enzyme catalyses (2R)-3-phosphoglycerate + ATP = (2R)-3-phospho-glyceroyl phosphate + ADP. Its pathway is carbohydrate degradation; glycolysis; pyruvate from D-glyceraldehyde 3-phosphate: step 2/5. This Corynebacterium diphtheriae (strain ATCC 700971 / NCTC 13129 / Biotype gravis) protein is Phosphoglycerate kinase.